We begin with the raw amino-acid sequence, 518 residues long: GTPase MTG2, mitochondrial (518 aa).

Residues 1–23 (MSIAWSSVFKRELRLERFLPRVY) constitute a mitochondrion transit peptide. The region spanning 89–339 (GNFVDVRIVK…QHFLFELKSI (251 aa)) is the Obg domain. The 173-residue stretch at 340–512 (ADLGLIGLPN…LKKKMFKCAR (173 aa)) folds into the OBG-type G domain. GTP contacts are provided by residues 346 to 353 (GLPNAGKS), 394 to 398 (DIPGI), and 460 to 463 (NKVD).

The protein belongs to the TRAFAC class OBG-HflX-like GTPase superfamily. OBG GTPase family. In terms of assembly, interacts with the mitochondrial 54S large ribosomal subunit.

The protein localises to the mitochondrion inner membrane. Functionally, required for mitochondrial protein synthesis. May be involved in mitochondrial ribosome biogenesis. This is GTPase MTG2, mitochondrial (MTG2) from Saccharomyces cerevisiae (strain ATCC 204508 / S288c) (Baker's yeast).